Consider the following 424-residue polypeptide: Adenylosuccinate synthetase (424 aa).

GTP is bound by residues 12-18 and 40-42; these read GDEGKGK and GHT. Catalysis depends on Asp-13, which acts as the Proton acceptor. Mg(2+)-binding residues include Asp-13 and Gly-40. Residues 13–16, 38–41, Thr-130, Arg-144, Asn-220, Thr-235, and Arg-299 each bind IMP; these read DEGK and NAGH. The Proton donor role is filled by His-41. 295-301 contacts substrate; sequence VTTGRRR. Residues Arg-301, 327 to 329, and 412 to 414 each bind GTP; these read KLD and GTG.

It belongs to the adenylosuccinate synthetase family. As to quaternary structure, homodimer. Mg(2+) is required as a cofactor.

The protein localises to the cytoplasm. It carries out the reaction IMP + L-aspartate + GTP = N(6)-(1,2-dicarboxyethyl)-AMP + GDP + phosphate + 2 H(+). It participates in purine metabolism; AMP biosynthesis via de novo pathway; AMP from IMP: step 1/2. Plays an important role in the de novo pathway and in the salvage pathway of purine nucleotide biosynthesis. Catalyzes the first committed step in the biosynthesis of AMP from IMP. The sequence is that of Adenylosuccinate synthetase from Neosartorya fischeri (strain ATCC 1020 / DSM 3700 / CBS 544.65 / FGSC A1164 / JCM 1740 / NRRL 181 / WB 181) (Aspergillus fischerianus).